The sequence spans 423 residues: MPLPQKKRWESMAKGLVLGALFTSFLLLLYSYAVPPLYTGLASTTPEGAAPCSPAPREPEAPTSANGSAGGCQPRRDIVFMKTHKTASSTLLNILFRFGQKHGLKFAFPNGRNDFDYPAFFARSLVQDYRPGACFNIICNHMRFHYDEVRGLVAPNATFITVLRDPARLFESSFHYFGSVVPFTWKLSGRDKLAEFLQDPDRYYDARGYNAHYLRNLLFFDLGYDSDLDPSSPQVQEHILEVERHFHLVLLQEYFDESLVLLKDLLCWELEDVLYFKLNARRASAVPRLSGELYRRATAWNVLDARLYRHFNASFWRKVEAFGRERMAREVAALRRANERMRRICIDGGRAVDAAAIEDSAMQPWQPLGAKSILGYNLKKSIGQRHAQLCRRMLTPEIQYLMDLGANLWITKLWKFIRDFLRW.

At 1–14 (MPLPQKKRWESMAK) the chain is on the cytoplasmic side. A helical; Signal-anchor for type II membrane protein transmembrane segment spans residues 15-35 (GLVLGALFTSFLLLLYSYAVP). At 36–423 (PLYTGLASTT…WKFIRDFLRW (388 aa)) the chain is on the lumenal side. A disordered region spans residues 48–70 (GAAPCSPAPREPEAPTSANGSAG). N-linked (GlcNAc...) asparagine glycosylation is found at Asn66, Asn156, and Asn312.

The protein belongs to the galactose-3-O-sulfotransferase family.

It is found in the golgi apparatus membrane. The catalysed reaction is a beta-D-galactosyl-(1&lt;-&gt;1')-N-acylsphing-4-enine + 3'-phosphoadenylyl sulfate = an N-acyl-1-beta-D-(3-O-sulfo)-galactosyl-sphing-4-enine + adenosine 3',5'-bisphosphate + H(+). It catalyses the reaction a 1-O-alkyl-2-acyl-3-O-(beta-D-galactosyl)-sn-glycerol + 3'-phosphoadenylyl sulfate = a 1-O-alkyl-2-acyl-3-(beta-D-3-sulfogalactosyl)-sn-glycerol + adenosine 3',5'-bisphosphate + H(+). The enzyme catalyses a beta-D-Gal-(1&lt;-&gt;1')-ceramide + 3'-phosphoadenylyl sulfate = 1-(3-O-sulfo-beta-D-galactosyl)-ceramide + adenosine 3',5'-bisphosphate + H(+). It carries out the reaction a 1,2-diacyl-3-O-(beta-D-galactosyl)-sn-glycerol + 3'-phosphoadenylyl sulfate = 1,2-diacyl-3-(3-O-sulfo-beta-D-galactosyl)-sn-glycerol + adenosine 3',5'-bisphosphate + H(+). The catalysed reaction is a beta-D-Gal-(1-&gt;4)-beta-D-Glc-(1&lt;-&gt;1)-Cer(d18:1(4E)) + 3'-phosphoadenylyl sulfate = beta-D-3-sulfogalactosyl-(1-&gt;4)-beta-D-glucosyl-(1&lt;-&gt;1')-N-acylsphing-4-enine + adenosine 3',5'-bisphosphate + H(+). It functions in the pathway lipid metabolism; sphingolipid metabolism. Functionally, catalyzes the transfer of a sulfate group to position 3 of non-reducing beta-galactosyl residues in glycerolipids and sphingolipids, therefore participates in the biosynthesis of sulfoglycolipids. Catalyzes the synthesis of galactosylceramide sulfate (sulfatide), a major lipid component of the myelin sheath and of monogalactosylalkylacylglycerol sulfate (seminolipid), present in spermatocytes. Seems to prefer beta-glycosides at the non-reducing termini of sugar chains attached to a lipid moiety. Also acts on lactosylceramide, galactosyl 1-alkyl-2-sn-glycerol and galactosyl diacylglycerol (in vitro). The sequence is that of Galactosylceramide sulfotransferase from Bos taurus (Bovine).